The primary structure comprises 921 residues: Translation initiation factor IF-2 (921 aa).

Disordered regions lie at residues 81-118 (AVAESLEEKPAEPVAPAAPTPPEVPAAAPAPPKAAAAP), 175-194 (PVVEKPKVPAQPDKPSANQA), and 219-301 (VAPA…KKHE). Positions 96–112 (PAAPTPPEVPAAAPAPP) are enriched in pro residues. Over residues 229 to 241 (RPSPAAGAPSRGA) the composition is skewed to low complexity. Residues 292–301 (KKKEQPKKHE) are compositionally biased toward basic and acidic residues. Positions 421–590 (KRPPVVTIMG…LLQADLMELK (170 aa)) constitute a tr-type G domain. Positions 430-437 (GHVDHGKT) are G1. 430-437 (GHVDHGKT) contributes to the GTP binding site. A G2 region spans residues 455 to 459 (GITQH). Residues 476–479 (DTPG) form a G3 region. GTP contacts are provided by residues 476–480 (DTPGH) and 530–533 (NKID). A G4 region spans residues 530-533 (NKID). A G5 region spans residues 566–568 (SAK).

This sequence belongs to the TRAFAC class translation factor GTPase superfamily. Classic translation factor GTPase family. IF-2 subfamily.

The protein resides in the cytoplasm. Its function is as follows. One of the essential components for the initiation of protein synthesis. Protects formylmethionyl-tRNA from spontaneous hydrolysis and promotes its binding to the 30S ribosomal subunits. Also involved in the hydrolysis of GTP during the formation of the 70S ribosomal complex. The polypeptide is Translation initiation factor IF-2 (Pelobacter propionicus (strain DSM 2379 / NBRC 103807 / OttBd1)).